Here is a 317-residue protein sequence, read N- to C-terminus: Phosphatidylglycerol--prolipoprotein diacylglyceryl transferase 2 (317 aa).

Transmembrane regions (helical) follow at residues Ile-19–Gly-39, Gly-51–Tyr-71, Val-93–Ile-113, and Ile-120–Gly-140. Arg-141 contacts a 1,2-diacyl-sn-glycero-3-phospho-(1'-sn-glycerol). Helical transmembrane passes span Pro-180–Ala-200, Phe-211–Ile-230, and Leu-241–Ala-261. The interval Gly-275–Ser-317 is disordered. A compositionally biased stretch (polar residues) spans Pro-299–Ser-317.

This sequence belongs to the Lgt family.

It localises to the cell membrane. It catalyses the reaction L-cysteinyl-[prolipoprotein] + a 1,2-diacyl-sn-glycero-3-phospho-(1'-sn-glycerol) = an S-1,2-diacyl-sn-glyceryl-L-cysteinyl-[prolipoprotein] + sn-glycerol 1-phosphate + H(+). It functions in the pathway protein modification; lipoprotein biosynthesis (diacylglyceryl transfer). Functionally, catalyzes the transfer of the diacylglyceryl group from phosphatidylglycerol to the sulfhydryl group of the N-terminal cysteine of a prolipoprotein, the first step in the formation of mature lipoproteins. The chain is Phosphatidylglycerol--prolipoprotein diacylglyceryl transferase 2 from Streptomyces coelicolor (strain ATCC BAA-471 / A3(2) / M145).